The chain runs to 241 residues: 15,16-dihydrobiliverdin:ferredoxin oxidoreductase (241 aa).

The disordered stretch occupies residues 16 to 35 (RGGQPAAVPEGLEHCHSSKS).

It belongs to the HY2 family.

The catalysed reaction is 15,16-dihydrobiliverdin + oxidized 2[4Fe-4S]-[ferredoxin] = biliverdin IXalpha + reduced 2[4Fe-4S]-[ferredoxin] + 2 H(+). Catalyzes the two-electron reduction of biliverdin IX-alpha at the C15 methine bridge. This is 15,16-dihydrobiliverdin:ferredoxin oxidoreductase from Synechococcus sp. (strain WH7803).